A 920-amino-acid polypeptide reads, in one-letter code: Anoctamin-4 (920 aa).

Residues methionine 1 to threonine 323 are Cytoplasmic-facing. A disordered region spans residues lysine 38–glutamate 64. Residues glycine 324 to leucine 344 traverse the membrane as a helical segment. Topologically, residues aspartate 345 to asparagine 389 are extracellular. Residues glycine 390 to tryptophan 410 form a helical membrane-spanning segment. Over lysine 411–serine 470 the chain is Cytoplasmic. The helical transmembrane segment at alanine 471–tyrosine 491 threads the bilayer. Topologically, residues arginine 492 to glutamine 512 are extracellular. Asparagine 509 carries N-linked (GlcNAc...) asparagine glycosylation. The helical transmembrane segment at valine 513–leucine 533 threads the bilayer. Topologically, residues tyrosine 534–lysine 560 are cytoplasmic. Residues methionine 561–glycine 581 form a helical membrane-spanning segment. Residues arginine 582–glutamate 680 lie on the Extracellular side of the membrane. A helical transmembrane segment spans residues methionine 681–leucine 701. The Cytoplasmic segment spans residues alanine 702–glycine 733. The chain crosses the membrane as a helical span at residues isoleucine 734–isoleucine 754. At alanine 755–leucine 850 the chain is on the extracellular side. N-linked (GlcNAc...) asparagine glycosylation is found at asparagine 789 and asparagine 802. The helical transmembrane segment at alanine 851–isoleucine 871 threads the bilayer. At proline 872–proline 920 the chain is on the cytoplasmic side.

It belongs to the anoctamin family.

The protein resides in the cell membrane. It catalyses the reaction a 1,2-diacyl-sn-glycero-3-phospho-L-serine(in) = a 1,2-diacyl-sn-glycero-3-phospho-L-serine(out). The catalysed reaction is a beta-D-galactosyl-(1&lt;-&gt;1')-N-acylsphing-4-enine(out) = a beta-D-galactosyl-(1&lt;-&gt;1')-N-acylsphing-4-enine(in). It carries out the reaction a 1,2-diacyl-sn-glycero-3-phosphocholine(in) = a 1,2-diacyl-sn-glycero-3-phosphocholine(out). Functionally, has calcium-dependent phospholipid scramblase activity; scrambles phosphatidylserine, phosphatidylcholine and galactosylceramide. Does not exhibit calcium-activated chloride channel (CaCC) activity. This Bos taurus (Bovine) protein is Anoctamin-4.